A 7760-amino-acid chain; its full sequence is Malpinin synthetase (7760 aa).

2 disordered regions span residues Glu42–Lys115 and Leu161–Val180. Polar residues predominate over residues Thr65–Pro79. The condensation 1 stretch occupies residues Thr87–Leu389. Basic and acidic residues predominate over residues Pro164–Val180. The adenylation 1 stretch occupies residues Phe409–Arg813. Positions Pro926–Arg1000 constitute a Carrier 1 domain. At Ser961 the chain carries O-(pantetheine 4'-phosphoryl)serine. The dual epimerase/condensation (E/C) domain 1 stretch occupies residues Gln1046–Leu1477. Positions Phe1498–Arg1893 are adenylation 2. Positions Ala2003–Arg2077 constitute a Carrier 2 domain. Ser2038 carries the post-translational modification O-(pantetheine 4'-phosphoryl)serine. The segment at Pro2099–Thr2558 is dual epimerase/condensation (E/C) domain 2. The tract at residues Phe2578 to Arg2973 is adenylation 3. One can recognise a Carrier 3 domain in the interval Ala3083–Arg3157. Residue Ser3118 is modified to O-(pantetheine 4'-phosphoryl)serine. Residues Gln3203–Arg3634 form a dual epimerase/condensation (E/C) domain 3 region. Positions Phe3658 to Arg4057 are adenylation 4. Positions Ala4174–Leu4248 constitute a Carrier 4 domain. At Ser4209 the chain carries O-(pantetheine 4'-phosphoryl)serine. The tract at residues Leu4267–Arg4705 is condensation 2. Residues Phe4729–Arg5133 form an adenylation 5 region. A Carrier 5 domain is found at Ala5250–Gln5324. At Ser5285 the chain carries O-(pantetheine 4'-phosphoryl)serine. A dual dehydration/condensation (C*) domain region spans residues Gln5370–Leu5804. Residues Phe5825 to Arg6224 form an adenylation 6 region. The 75-residue stretch at Ala6338–His6412 folds into the Carrier 6 domain. Ser6373 carries the O-(pantetheine 4'-phosphoryl)serine modification. The tract at residues Gln6458–His6890 is dual epimerase/condensation (E/C) domain 4. Positions Phe6914–Cys7300 are adenylation 7. A Carrier 7 domain is found at Glu7428–Gly7503. Ser7463 is subject to O-(pantetheine 4'-phosphoryl)serine. The segment at Asp7561 to Val7722 is thioesterase (TE) domain.

It belongs to the NRP synthetase family.

In terms of biological role, heptamodular nonribosomal peptide synthetase that catalyzes the biosynthesis of malpinins, natural products that show biosurfactant activities. Malpinins are acetylated hexapeptides (Ac-D-Leu/Val-D-Arg-D-Leu/Val-L-Phe/Leu-Dhb-D-Trp) containing a non-canonical amino acid derived from dehydration of L-Trp, (Z)-dehydrobutyrine (Dhb), at position 5, as well as a C-terminal D-amino acid, D-tryptophan, that can be oxidized to kynurenine. Incorporated D-amino acids in positions 1, 3 and 4 are variable resulting in the malpinin A-congeners malpinin B to E. Both modules M1 and M3 have relaxed specificity towards aliphatic amino acids (L-Leu &gt; L-Met &gt; L/D-Val &gt; L-Cys), explaining Val at position 1 and 3 in malpinin A-congeners malpinin B to D. The incorporation of L-Leu, but not N-acetyl-L-Leu by module 1 suggests the N-terminal acetylation occurs at a later stage of biosynthesis. Similar to M1 and M3, M4 has a broad substrate spectrum showing the highest activity with L-Phe followed by other hydrophobic amino acids (L-Phe &gt; L-Met = L-Trp). In contrast, M2, M5 and M6 are highly specific for L-Arg, L-Thr, and L-Trp, respectively. Solely, M7 converted its preferred substrate (L-Phe) with a 15 000-fold reduced turnover rate compared to the most active module M6, indicating that its A domain cannot contribute to the malpinin biosynthesis due to low activity. Since the last T domain in malA is apparently not loaded with an amino acid, either the TE domain must offload the oligopeptide from the preceding T domain or the dual E/C domain of M7 must transfer the final peptide chain to the free acceptor T domain of M7 prior to release. The sequence is that of Malpinin synthetase from Mortierella alpina (Oleaginous fungus).